The chain runs to 487 residues: N-succinylglutamate 5-semialdehyde dehydrogenase (487 aa).

221–226 (GSSDTG) serves as a coordination point for NAD(+). Catalysis depends on residues Glu244 and Cys278.

It belongs to the aldehyde dehydrogenase family. AstD subfamily.

The catalysed reaction is N-succinyl-L-glutamate 5-semialdehyde + NAD(+) + H2O = N-succinyl-L-glutamate + NADH + 2 H(+). It participates in amino-acid degradation; L-arginine degradation via AST pathway; L-glutamate and succinate from L-arginine: step 4/5. In terms of biological role, catalyzes the NAD-dependent reduction of succinylglutamate semialdehyde into succinylglutamate. The protein is N-succinylglutamate 5-semialdehyde dehydrogenase of Burkholderia ambifaria (strain ATCC BAA-244 / DSM 16087 / CCUG 44356 / LMG 19182 / AMMD) (Burkholderia cepacia (strain AMMD)).